The primary structure comprises 264 residues: Undecaprenyl-diphosphatase 2 (264 aa).

7 helical membrane passes run glycine 29–tryptophan 49, serine 77–leucine 97, leucine 107–phenylalanine 127, alanine 137–valine 157, phenylalanine 180–leucine 200, valine 212–methionine 232, and phenylalanine 243–leucine 263.

It belongs to the UppP family.

It localises to the cell inner membrane. The catalysed reaction is di-trans,octa-cis-undecaprenyl diphosphate + H2O = di-trans,octa-cis-undecaprenyl phosphate + phosphate + H(+). Functionally, catalyzes the dephosphorylation of undecaprenyl diphosphate (UPP). Confers resistance to bacitracin. The chain is Undecaprenyl-diphosphatase 2 from Mesorhizobium japonicum (strain LMG 29417 / CECT 9101 / MAFF 303099) (Mesorhizobium loti (strain MAFF 303099)).